The following is a 37-amino-acid chain: Large ribosomal subunit protein bL36 (37 aa).

The protein belongs to the bacterial ribosomal protein bL36 family.

This chain is Large ribosomal subunit protein bL36, found in Synechococcus sp. (strain CC9605).